The following is a 240-amino-acid chain: MGRRIQGQRRGRGTSTFRAPSHRYKADLEHRKVEDGDVIAGTVVDIEHDPARSAPVAAVEFEDGDRRLILAPEGVGVGDELQVGVSAEIAPGNTLPLAEIPEGVPVCNVESSPGDGGKFARASGVNAQLLTHDRNVAVVKLPSGEMKRLDPQCRATIGVVAGGGRTDKPFVKAGNKHHKMKARGTKWPNVRGVAMNAVDHPFGGGGRQHPGKPKSISRNAPPGRKVGDIASKRTGRGGNE.

The tract at residues 200–240 (HPFGGGGRQHPGKPKSISRNAPPGRKVGDIASKRTGRGGNE) is disordered.

The protein belongs to the universal ribosomal protein uL2 family. As to quaternary structure, part of the 50S ribosomal subunit. Forms a bridge to the 30S subunit in the 70S ribosome. Interacts weakly with protein L37Ae.

In terms of biological role, one of the primary rRNA binding proteins. Required for association of the 30S and 50S subunits to form the 70S ribosome, for tRNA binding and peptide bond formation. It has been suggested to have peptidyltransferase activity; this is somewhat controversial. Makes several contacts with the 16S rRNA in the 70S ribosome. The chain is Large ribosomal subunit protein uL2 (rpl2) from Haloarcula marismortui (strain ATCC 43049 / DSM 3752 / JCM 8966 / VKM B-1809) (Halobacterium marismortui).